The primary structure comprises 456 residues: Short chain dehydrogenase tazN (456 aa).

NADP(+) is bound by residues V45, D99, N126, R160, Y195, K199, and T229. Catalysis depends on Y195, which acts as the Proton donor. K199 functions as the Lowers pKa of active site Tyr in the catalytic mechanism.

It belongs to the short-chain dehydrogenases/reductases (SDR) family.

Its pathway is secondary metabolite biosynthesis. Functionally, short chain dehydrogenase; part of the gene cluster that mediates the biosynthesis of azaterrilone A and other azaphilones, a class of fungal metabolites characterized by a highly oxygenated pyrano-quinone bicyclic core and exhibiting a broad range of bioactivities. The first step of the pathway begins with the non-reducing polyketide synthase tazA that assembles one acetyl-CoA starter unit, five malonyl-CoA units, and catalyzes a series of Claisen condensations, methylation, PT-mediated cyclization, and finally releases the first hexaketide precursor through the R-domain. The tazA product then undergoes reduction on its terminal ketone and the following pyran-ring formation by yet undetermined enzyme(s). Dehydration and enoyl reduction, possibly involving the trans-enoyl reductase tazE leads to the next intermediate. TazD is predicted as an acetyltransferase and might catalyze the acetylation steps leading to the synthesis of azaterrilone A. Azaterrilone A is not the final product of the taz pathway and both the highly reducing polyketide synthase tazB and the dual enzyme tazHJ catalyze late steps of the pathway, leading to the production of the 2 final stereoisomers that contain additional polyketide modification whose structures have still to be determined. This is Short chain dehydrogenase tazN from Aspergillus terreus (strain NIH 2624 / FGSC A1156).